The sequence spans 759 residues: Spindle pole body component alp16 (759 aa).

As to quaternary structure, interacts with gamma-tubulin.

Its subcellular location is the cytoplasm. It is found in the cytoskeleton. The protein resides in the microtubule organizing center. The protein localises to the spindle pole body. In terms of biological role, component of the gamma tubule complex that is required for the regulation of both interphase microtubules and mitotic bipolar spindles. This Schizosaccharomyces pombe (strain 972 / ATCC 24843) (Fission yeast) protein is Spindle pole body component alp16 (alp16).